Here is a 210-residue protein sequence, read N- to C-terminus: Ribonuclease HII (210 aa).

Residues 18-207 (RFVAGVDEVG…VHKILCKEET (190 aa)) enclose the RNase H type-2 domain. Positions 24, 25, and 115 each coordinate a divalent metal cation.

This sequence belongs to the RNase HII family. Requires Mn(2+) as cofactor. Mg(2+) is required as a cofactor.

It localises to the cytoplasm. The catalysed reaction is Endonucleolytic cleavage to 5'-phosphomonoester.. Its function is as follows. Endonuclease that specifically degrades the RNA of RNA-DNA hybrids. This is Ribonuclease HII from Paracoccus denitrificans (strain Pd 1222).